A 485-amino-acid chain; its full sequence is Glutamyl-tRNA(Gln) amidotransferase subunit A (485 aa).

Residues lysine 78 and serine 153 each act as charge relay system in the active site. The active-site Acyl-ester intermediate is the serine 177.

This sequence belongs to the amidase family. GatA subfamily. Heterotrimer of A, B and C subunits.

The enzyme catalyses L-glutamyl-tRNA(Gln) + L-glutamine + ATP + H2O = L-glutaminyl-tRNA(Gln) + L-glutamate + ADP + phosphate + H(+). Functionally, allows the formation of correctly charged Gln-tRNA(Gln) through the transamidation of misacylated Glu-tRNA(Gln) in organisms which lack glutaminyl-tRNA synthetase. The reaction takes place in the presence of glutamine and ATP through an activated gamma-phospho-Glu-tRNA(Gln). This chain is Glutamyl-tRNA(Gln) amidotransferase subunit A, found in Desulfatibacillum aliphaticivorans.